A 224-amino-acid chain; its full sequence is Cysteine S-methyltransferase NleE (224 aa).

The interaction with host proteins TAB2, TAB3 and ZRANB3 stretch occupies residues 49–52; that stretch reads GITR. S-adenosyl-L-methionine contacts are provided by Ala-92, Ser-98, Arg-107, Gln-111, Tyr-204, and Glu-208.

The protein belongs to the NleE/OspZ family. As to quaternary structure, monomer.

Its subcellular location is the secreted. The protein resides in the host nucleus. The enzyme catalyses L-cysteinyl-[protein] + S-adenosyl-L-methionine = S-methyl-L-cysteinyl-[protein] + S-adenosyl-L-homocysteine + H(+). In terms of biological role, cysteine methyltransferase effector that inhibits host cell NF-kappa-B activation by preventing nuclear translocation of host protein RELA/p65. Acts by mediating cysteine methylation of host proteins TAB2 and TAB3: methylation of a conserved cysteine residue of the RanBP2-type zinc finger (NZF) of TAB2 and TAB3 disrupts zinc-binding, thereby inactivating the ubiquitin chain-binding activity of TAB2 and TAB3, leading to NF-kappa-B inactivation. Also mediates cysteine methylation of host protein ZRANB3, inactivating its ability to bind ubiquitin chains. This Escherichia coli O127:H6 (strain E2348/69 / EPEC) protein is Cysteine S-methyltransferase NleE.